Consider the following 607-residue polypeptide: MTEAFDSGAFLSTVSGRPGVYRMFDSDARLLYVGKAKSLKKRLASYFRKTGLAPKTAALVGRIAQVETTITSNETEALLLEQTLIKEWRPPYNILLRDDKSYPYVFLSDGQFPRLSIHRGAKKAKGKYFGPYPSAGAIRESLSLLQKTFFVRQCEDSYYKNRTRPCLQYQIKRCKAPCVGLVEPEVYAEDVRHSVMFLEGRSHALTNELSTAMEEAAINLEFERAAELRDQIALLRRVQDQQSMEGGTGDIDVIAAFVNPGGACVHLISVRGGRVLGSKNFFPQVGIEEEVAEVMAAFLGQYFISSPERDLPSELIVNVVHEDFPALIEAIQALRGRELSISHRVRGTRARWQQLAVTNAEQALGARLANRQHVAARFEALAEVLNLDEPPQRLECYDISHSSGEATVASCVVFGPEGAIKSDYRRYNIEGVTAGDDYAAMHQALTRRFSKLKEGEGKLPDILLVDGGKGQLSMARDVLNELAVPDLILLGVAKGATRKAGFETLYLNDAANEFTLRGDSPALHLIQQIRDEAHRFAITGHRARRGKTRRTSTLEGVAGVGPTRRRDLLKHFGGLQELSRASIEEIAKAPGISKKLAESIYANLHSE.

The GIY-YIG domain maps to 16-94 (GRPGVYRMFD…IKEWRPPYNI (79 aa)). One can recognise a UVR domain in the interval 203–238 (HALTNELSTAMEEAAINLEFERAAELRDQIALLRRV).

It belongs to the UvrC family. As to quaternary structure, interacts with UvrB in an incision complex.

Its subcellular location is the cytoplasm. Functionally, the UvrABC repair system catalyzes the recognition and processing of DNA lesions. UvrC both incises the 5' and 3' sides of the lesion. The N-terminal half is responsible for the 3' incision and the C-terminal half is responsible for the 5' incision. The chain is UvrABC system protein C from Pseudomonas fluorescens (strain Pf0-1).